A 100-amino-acid polypeptide reads, in one-letter code: Integration host factor subunit alpha (100 aa).

It belongs to the bacterial histone-like protein family. Heterodimer of an alpha and a beta chain.

Functionally, this protein is one of the two subunits of integration host factor, a specific DNA-binding protein that functions in genetic recombination as well as in transcriptional and translational control. This Methylobacillus flagellatus (strain ATCC 51484 / DSM 6875 / VKM B-1610 / KT) protein is Integration host factor subunit alpha.